A 474-amino-acid polypeptide reads, in one-letter code: tRNA-2-methylthio-N(6)-dimethylallyladenosine synthase (474 aa).

One can recognise an MTTase N-terminal domain in the interval 3-120 (KKLHIKTWGC…LPEMINSVRG (118 aa)). [4Fe-4S] cluster contacts are provided by Cys-12, Cys-49, Cys-83, Cys-157, Cys-161, and Cys-164. In terms of domain architecture, Radical SAM core spans 143-375 (RAEGPTAFVS…QERINQQAMA (233 aa)). In terms of domain architecture, TRAM spans 378–441 (RRMLGTTQRI…PNSLRGKVVR (64 aa)).

The protein belongs to the methylthiotransferase family. MiaB subfamily. Monomer. [4Fe-4S] cluster serves as cofactor.

The protein localises to the cytoplasm. It catalyses the reaction N(6)-dimethylallyladenosine(37) in tRNA + (sulfur carrier)-SH + AH2 + 2 S-adenosyl-L-methionine = 2-methylsulfanyl-N(6)-dimethylallyladenosine(37) in tRNA + (sulfur carrier)-H + 5'-deoxyadenosine + L-methionine + A + S-adenosyl-L-homocysteine + 2 H(+). Its function is as follows. Catalyzes the methylthiolation of N6-(dimethylallyl)adenosine (i(6)A), leading to the formation of 2-methylthio-N6-(dimethylallyl)adenosine (ms(2)i(6)A) at position 37 in tRNAs that read codons beginning with uridine. The sequence is that of tRNA-2-methylthio-N(6)-dimethylallyladenosine synthase from Escherichia coli (strain SMS-3-5 / SECEC).